We begin with the raw amino-acid sequence, 357 residues long: S-adenosylmethionine:tRNA ribosyltransferase-isomerase (357 aa).

Belongs to the QueA family. In terms of assembly, monomer.

The protein localises to the cytoplasm. It carries out the reaction 7-aminomethyl-7-carbaguanosine(34) in tRNA + S-adenosyl-L-methionine = epoxyqueuosine(34) in tRNA + adenine + L-methionine + 2 H(+). It functions in the pathway tRNA modification; tRNA-queuosine biosynthesis. Transfers and isomerizes the ribose moiety from AdoMet to the 7-aminomethyl group of 7-deazaguanine (preQ1-tRNA) to give epoxyqueuosine (oQ-tRNA). This is S-adenosylmethionine:tRNA ribosyltransferase-isomerase from Phenylobacterium zucineum (strain HLK1).